A 43-amino-acid chain; its full sequence is Myotoxin-2 (43 aa).

3 disulfides stabilise this stretch: Cys4–Cys36, Cys11–Cys30, and Cys18–Cys37.

This sequence belongs to the crotamine-myotoxin family. Monomer. In terms of tissue distribution, expressed by the venom gland.

The protein localises to the secreted. Its function is as follows. Cationic peptide that possesses multiple functions. It acts as a cell-penetrating peptide (CPP), and as a potent voltage-gated potassium channel (Kv) inhibitor. It exhibits antimicrobial activities, hind limb paralysis, and severe muscle necrosis by a non-enzymatic mechanism. This chain is Myotoxin-2, found in Crotalus concolor (Midget faded rattlesnake).